The sequence spans 427 residues: UDP-N-acetylglucosamine--N-acetylmuramyl-(pentapeptide) pyrophosphoryl-undecaprenol N-acetylglucosamine transferase (427 aa).

UDP-N-acetyl-alpha-D-glucosamine-binding positions include 29–31 (TGG), Asn-141, Arg-177, Ser-205, Ile-258, and Gln-303. The segment at 408–427 (SLHPIPDSRFPIRTSAGGAQ) is disordered.

It belongs to the glycosyltransferase 28 family. MurG subfamily.

It localises to the cell inner membrane. It catalyses the reaction di-trans,octa-cis-undecaprenyl diphospho-N-acetyl-alpha-D-muramoyl-L-alanyl-D-glutamyl-meso-2,6-diaminopimeloyl-D-alanyl-D-alanine + UDP-N-acetyl-alpha-D-glucosamine = di-trans,octa-cis-undecaprenyl diphospho-[N-acetyl-alpha-D-glucosaminyl-(1-&gt;4)]-N-acetyl-alpha-D-muramoyl-L-alanyl-D-glutamyl-meso-2,6-diaminopimeloyl-D-alanyl-D-alanine + UDP + H(+). Its pathway is cell wall biogenesis; peptidoglycan biosynthesis. Functionally, cell wall formation. Catalyzes the transfer of a GlcNAc subunit on undecaprenyl-pyrophosphoryl-MurNAc-pentapeptide (lipid intermediate I) to form undecaprenyl-pyrophosphoryl-MurNAc-(pentapeptide)GlcNAc (lipid intermediate II). The protein is UDP-N-acetylglucosamine--N-acetylmuramyl-(pentapeptide) pyrophosphoryl-undecaprenol N-acetylglucosamine transferase of Xanthomonas campestris pv. campestris (strain B100).